A 181-amino-acid polypeptide reads, in one-letter code: UPF0398 protein lmo1889 (181 aa).

It belongs to the UPF0398 family.

The protein is UPF0398 protein lmo1889 of Listeria monocytogenes serovar 1/2a (strain ATCC BAA-679 / EGD-e).